We begin with the raw amino-acid sequence, 605 residues long: Replication and transcription activator (605 aa).

2 disordered regions span residues 307–381 and 447–501; these read SLPS…EPEQ and RIRP…TPEA. Over residues 321 to 338 the composition is skewed to low complexity; it reads SADCGDSSSSSSDSGNSD. Residues 341–353 show a composition bias toward basic and acidic residues; it reads QSEREEARAEAPR. Positions 355–364 are enriched in basic residues; sequence RAPKSRRTSR.

The protein belongs to the herpesviridae Rta family. As to quaternary structure, interacts with human ATF7IP protein, leading to promote and regulate host genes in virus-infected cells. Interacts with RNA polymerase III complex; this interaction downregulates small RNA transcription and 5'-pppRNA production.

It is found in the host nucleus. Its subcellular location is the virion tegument. Immediate-early transcription factor that controls the initiation of viral lytic gene expression and lytic reactivation from latency. Triggers lytic replication, and initiates a cellular senescence program in epithelial cells. Up-regulates human DCR3/TNFRSF6B by directly binding to its receptor. Globally induces a proteasome-dependent loss of SUMOylated proteins in the host cell and the loss of promeylocytic leukemia nuclear bodies. Improves the stability of the triplex capsid protein TRX1 by reducing the ubiquitination level of the latter. Mediates evasion of inflammasome activation and antiviral responses (T- and NK cell activation) during EBV early lytic infection. In Epstein-Barr virus (strain GD1) (HHV-4), this protein is Replication and transcription activator.